Reading from the N-terminus, the 96-residue chain is Putative septation protein SpoVG (96 aa).

This sequence belongs to the SpoVG family.

Could be involved in septation. The protein is Putative septation protein SpoVG of Borrelia hermsii (strain HS1 / DAH).